The primary structure comprises 255 residues: 5'-nucleotidase SurE (255 aa).

Positions 8, 9, 40, and 92 each coordinate a divalent metal cation.

It belongs to the SurE nucleotidase family. Requires a divalent metal cation as cofactor.

The protein resides in the cytoplasm. It catalyses the reaction a ribonucleoside 5'-phosphate + H2O = a ribonucleoside + phosphate. In terms of biological role, nucleotidase that shows phosphatase activity on nucleoside 5'-monophosphates. The chain is 5'-nucleotidase SurE from Brucella suis (strain ATCC 23445 / NCTC 10510).